The following is a 280-amino-acid chain: Monoacylglycerol lipase (280 aa).

Residue Ser-111 is the Nucleophile of the active site. Residues Asp-227 and His-257 each act as charge relay system in the active site.

The protein belongs to the AB hydrolase superfamily.

It localises to the secreted. It is found in the cell wall. The enzyme catalyses Hydrolyzes glycerol monoesters of long-chain fatty acids.. Its function is as follows. Contributes to cell growth, probably by hydrolyzing exogenous lipids. Catalyzes the hydrolysis of monoacylglycerols (MAG) with fatty acid chains ranging from C14 to C18, with a maximum activity on monoolein. Is unable to hydrolyze long-chain diacylglycerol (DAG). The polypeptide is Monoacylglycerol lipase (Mycolicibacterium smegmatis (strain ATCC 700084 / mc(2)155) (Mycobacterium smegmatis)).